The primary structure comprises 597 residues: Sulfite reductase [NADPH] flavoprotein alpha-component (597 aa).

The Flavodoxin-like domain maps to 62-200 (VTVLSASQTG…TADKWIQDVV (139 aa)). FMN-binding positions include 68–73 (SQTGNA), 115–118 (STQG), and 151–160 (LGDTSYPNFC). Residues 232–446 (ENPYTAKLIT…VEPNDNFRLP (215 aa)) form the FAD-binding FR-type domain. Residues threonine 320, asparagine 354, 384-387 (RLYS), 402-404 (SVG), and 417-420 (GVAS) each bind FAD. Residues 517–518 (SR), 523–527 (KIYVQ), and aspartate 559 each bind NADP(+). Tyrosine 597 provides a ligand contact to FAD.

This sequence belongs to the NADPH-dependent sulphite reductase flavoprotein subunit CysJ family. The protein in the N-terminal section; belongs to the flavodoxin family. In the C-terminal section; belongs to the flavoprotein pyridine nucleotide cytochrome reductase family. In terms of assembly, alpha(8)-beta(8). The alpha component is a flavoprotein, the beta component is a hemoprotein. It depends on FAD as a cofactor. FMN serves as cofactor.

It carries out the reaction hydrogen sulfide + 3 NADP(+) + 3 H2O = sulfite + 3 NADPH + 4 H(+). It participates in sulfur metabolism; hydrogen sulfide biosynthesis; hydrogen sulfide from sulfite (NADPH route): step 1/1. Component of the sulfite reductase complex that catalyzes the 6-electron reduction of sulfite to sulfide. This is one of several activities required for the biosynthesis of L-cysteine from sulfate. The flavoprotein component catalyzes the electron flow from NADPH -&gt; FAD -&gt; FMN to the hemoprotein component. The polypeptide is Sulfite reductase [NADPH] flavoprotein alpha-component (Mannheimia succiniciproducens (strain KCTC 0769BP / MBEL55E)).